Here is a 752-residue protein sequence, read N- to C-terminus: Double zinc ribbon and ankyrin repeat-containing protein 1 (752 aa).

DZANK-type zinc fingers lie at residues 210 to 270 (CPKC…VVCE) and 338 to 386 (CSKC…GGCG). Residues 448 to 469 (KKRSQQREAELSRQEQMRDRKP) show a composition bias toward basic and acidic residues. Disordered stretches follow at residues 448–471 (KKRSQQREAELSRQEQMRDRKPLL) and 536–614 (PPEE…VGPE). A compositionally biased stretch (low complexity) spans 536–554 (PPEESRSSSAGQRSRSVTS). Polar residues predominate over residues 555–580 (ESQNLSSVTEGRNSASPENNINTTGS). Positions 600–614 (PESKDSLLLKEVGPE) are enriched in basic and acidic residues. 3 ANK repeats span residues 638–667 (DGRPALVAAVLNGHHDVIPVLVQREADVNQ), 672–703 (LKNTALHEAAALGDEGLKSVEILLGCNASIRK), and 707–737 (RGQTPYDIAVAAGSSSVLSLMAAHLGQGLLL).

It is found in the cytoplasm. It localises to the cytoskeleton. Its subcellular location is the microtubule organizing center. The protein resides in the centrosome. The protein localises to the cilium basal body. Required for the intracellular transport of organelles and vesicles, and is essential for the photoreceptor's outer segments formation, maintenance and function. This is Double zinc ribbon and ankyrin repeat-containing protein 1 (dzank1) from Danio rerio (Zebrafish).